The following is a 623-amino-acid chain: Replication protein A 70 kDa DNA-binding subunit (623 aa).

An N-acetylmethionine modification is found at methionine 1. Residues lysine 22 and lysine 88 each participate in a glycyl lysine isopeptide (Lys-Gly) (interchain with G-Cter in ubiquitin) cross-link. Residues 116–163 are disordered; the sequence is VPYNEGYGQQQQQQQQQQQQAVPSPASAATPPASKPQPQNGSLGMGST. The span at 124 to 154 shows a compositional bias: low complexity; it reads QQQQQQQQQQQQAVPSPASAATPPASKPQPQ. N6-acetyllysine; alternate occurs at positions 172 and 176. Glycyl lysine isopeptide (Lys-Gly) (interchain with G-Cter in ubiquitin); alternate cross-links involve residues lysine 172 and lysine 176. Threonine 189 is subject to Phosphothreonine. Residue lysine 192 forms a Glycyl lysine isopeptide (Lys-Gly) (interchain with G-Cter in ubiquitin) linkage. Threonine 200 is modified (phosphothreonine). The segment at residues 206–290 is a DNA-binding region (OB); it reads WTICARVTNK…VKNDYEMTFN (85 aa). Residues lysine 229 and lysine 253 each participate in a glycyl lysine isopeptide (Lys-Gly) (interchain with G-Cter in ubiquitin) cross-link. The residue at position 268 (lysine 268) is an N6-acetyllysine; alternate. A Glycyl lysine isopeptide (Lys-Gly) (interchain with G-Cter in ubiquitin); alternate cross-link involves residue lysine 268. Residues lysine 276 and lysine 340 each participate in a glycyl lysine isopeptide (Lys-Gly) (interchain with G-Cter in ubiquitin) cross-link. Residue serine 393 is modified to Phosphoserine. Residue lysine 419 forms a Glycyl lysine isopeptide (Lys-Gly) (interchain with G-Cter in ubiquitin) linkage. Residue lysine 458 forms a Glycyl lysine isopeptide (Lys-Gly) (interchain with G-Cter in SUMO) linkage. Lysine 467 participates in a covalent cross-link: Glycyl lysine isopeptide (Lys-Gly) (interchain with G-Cter in ubiquitin). The segment at 490–512 adopts a C4-type zinc-finger fold; it reads CPTQDCNKKVIDQQNGLYRCEKC. Lysine 562 participates in a covalent cross-link: Glycyl lysine isopeptide (Lys-Gly) (interchain with G-Cter in ubiquitin). A Glycyl lysine isopeptide (Lys-Gly) (interchain with G-Cter in SUMO) cross-link involves residue lysine 586.

The protein belongs to the replication factor A protein 1 family. As to quaternary structure, component of the canonical replication protein A complex (RPA), a heterotrimer composed of RPA1, RPA2 and RPA3. The DNA-binding activity may reside exclusively on the RPA1 subunit. Interacts with PRPF19; the PRP19-CDC5L complex is recruited to the sites of DNA repair where it ubiquitinates the replication protein A complex (RPA). Interacts with RIPK1. Interacts with the polymerase alpha subunit POLA1/p180; this interaction stabilizes the replicative complex and reduces the misincorporation rate of DNA polymerase alpha by acting as a fidelity clamp. Interacts with RAD51 and SENP6 to regulate DNA repair. Interacts with HELB; this interaction promotes HELB recruitment to chromatin following DNA damage. Interacts with PRIMPOL; leading to recruit PRIMPOL on chromatin and stimulate its DNA primase activity. Interacts with XPA; the interaction is direct and associates XPA with the RPA complex. Interacts with ETAA1; the interaction is direct and promotes ETAA1 recruitment at stalled replication forks. Interacts with RPA1; this interaction associates HROB with the RPA complex. Interacts (when poly-ADP-ribosylated) with HTATSF1. In terms of processing, DNA damage-induced 'Lys-63'-linked polyubiquitination by PRPF19 mediates ATRIP recruitment to the RPA complex at sites of DNA damage and activation of ATR. Ubiquitinated by RFWD3 at stalled replication forks in response to DNA damage: ubiquitination by RFWD3 does not lead to degradation by the proteasome and promotes removal of the RPA complex from stalled replication forks, promoting homologous recombination. Post-translationally, sumoylated on lysine residues Lys-458 and Lys-586, with Lys-458 being the major site. Sumoylation promotes recruitment of RAD51 to the DNA damage foci to initiate DNA repair through homologous recombination. Desumoylated by SENP6. Poly-ADP-ribosylated by PARP1; promoting recruitment of HTATSF1.

Its subcellular location is the nucleus. The protein localises to the PML body. Functionally, as part of the heterotrimeric replication protein A complex (RPA/RP-A), binds and stabilizes single-stranded DNA intermediates, that form during DNA replication or upon DNA stress. It prevents their reannealing and in parallel, recruits and activates different proteins and complexes involved in DNA metabolism. Thereby, it plays an essential role both in DNA replication and the cellular response to DNA damage. In the cellular response to DNA damage, the RPA complex controls DNA repair and DNA damage checkpoint activation. Through recruitment of ATRIP activates the ATR kinase a master regulator of the DNA damage response. It is required for the recruitment of the DNA double-strand break repair factors RAD51 and RAD52 to chromatin in response to DNA damage. Also recruits to sites of DNA damage proteins like XPA and XPG that are involved in nucleotide excision repair and is required for this mechanism of DNA repair. Also plays a role in base excision repair (BER) probably through interaction with UNG. Also recruits SMARCAL1/HARP, which is involved in replication fork restart, to sites of DNA damage. May also play a role in telomere maintenance. In Mus musculus (Mouse), this protein is Replication protein A 70 kDa DNA-binding subunit (Rpa1).